We begin with the raw amino-acid sequence, 81 residues long: Serine protease inhibitor Kazal-type 2 (81 aa).

The first 21 residues, 1-21, serve as a signal peptide directing secretion; sequence MALAVLRLALLLLAVTFAGPL. A Kazal-like domain is found at 27-81; that stretch reads KYKTPFCARYQLPGCPRDFNPVCGTDMITYPNECTLCMKIRESGQNIKILRRGPC. 3 disulfide bridges follow: Cys33/Cys63, Cys41/Cys60, and Cys49/Cys81.

More abundant in epididymis than in testis.

Its subcellular location is the secreted. The protein localises to the cytoplasmic vesicle. It localises to the secretory vesicle. It is found in the acrosome. In terms of biological role, strong inhibitor of acrosin in male and/or female genital tract. Also inhibits trypsin. As a strong inhibitor of acrosin, it is required for normal spermiogenesis. It probably hinders premature activation of proacrosin and other proteases, thus preventing the cascade of events leading to spermiogenesis defects. May be involved in the regulation of serine protease-dependent germ cell apoptosis. It also inhibits trypsin. In Macaca fascicularis (Crab-eating macaque), this protein is Serine protease inhibitor Kazal-type 2 (SPINK2).